We begin with the raw amino-acid sequence, 195 residues long: MSTTIEIPESSKVAKGKAVAVVAPARPGGWKKGVAIMDFILRLGAIAAALGAAATMGTSDQTLPFFTQFFQFEASYDSFTTFQFFVITMSLVGGYLVLSLPFSIVAIVRPHAVGPRLFLIILDTAFLTLATAGGASAAAIVYLAHNGDQDTNWLAICNQFGDFCAQTSAAVVSSFVAVVVLVLLIIMSALAIGKP.

At 1–33 (MSTTIEIPESSKVAKGKAVAVVAPARPGGWKKG) the chain is on the cytoplasmic side. Residues 34–54 (VAIMDFILRLGAIAAALGAAA) form a helical membrane-spanning segment. At 55 to 83 (TMGTSDQTLPFFTQFFQFEASYDSFTTFQ) the chain is on the extracellular side. The chain crosses the membrane as a helical span at residues 84 to 104 (FFVITMSLVGGYLVLSLPFSI). Residues 105–116 (VAIVRPHAVGPR) are Cytoplasmic-facing. The helical transmembrane segment at 117–137 (LFLIILDTAFLTLATAGGASA) threads the bilayer. Over 138–171 (AAIVYLAHNGDQDTNWLAICNQFGDFCAQTSAAV) the chain is Extracellular. Residues 172–192 (VSSFVAVVVLVLLIIMSALAI) traverse the membrane as a helical segment. The Cytoplasmic portion of the chain corresponds to 193–195 (GKP).

This sequence belongs to the Casparian strip membrane proteins (CASP) family. Homodimer and heterodimers.

The protein localises to the cell membrane. Regulates membrane-cell wall junctions and localized cell wall deposition. Required for establishment of the Casparian strip membrane domain (CSD) and the subsequent formation of Casparian strips, a cell wall modification of the root endodermis that determines an apoplastic barrier between the intraorganismal apoplasm and the extraorganismal apoplasm and prevents lateral diffusion. The protein is Casparian strip membrane protein 1 of Glycine max (Soybean).